Here is a 572-residue protein sequence, read N- to C-terminus: NADH-ubiquinone oxidoreductase chain 5 (572 aa).

A run of 17 helical transmembrane segments spans residues 6–26 (FFFL…YLMI), 44–64 (VVMT…VMYI), 86–106 (IMIV…PNLI), 107–127 (SILL…IYYQ), 147–167 (VAIL…YIYY), 179–201 (IITL…SSWL), 208–230 (PTPV…LLIR), 234–254 (MLMV…TMFM), 268–288 (IIAL…SMGY), 291–311 (LAFF…MCAG), 337–357 (SICF…AGFY), 372–394 (NFFI…FRLF), 422–442 (IGLL…IFPV), 454–474 (FLTL…SDFV), 479–499 (LFSL…FMPF), 524–544 (WGEL…INYI), and 552–572 (FKVY…LFFL).

The protein belongs to the complex I subunit 5 family.

The protein localises to the mitochondrion inner membrane. It catalyses the reaction a ubiquinone + NADH + 5 H(+)(in) = a ubiquinol + NAD(+) + 4 H(+)(out). Its function is as follows. Core subunit of the mitochondrial membrane respiratory chain NADH dehydrogenase (Complex I) that is believed to belong to the minimal assembly required for catalysis. Complex I functions in the transfer of electrons from NADH to the respiratory chain. The immediate electron acceptor for the enzyme is believed to be ubiquinone. The chain is NADH-ubiquinone oxidoreductase chain 5 (ND5) from Locusta migratoria (Migratory locust).